Reading from the N-terminus, the 424-residue chain is Protein arginine N-methyltransferase 2 (424 aa).

2 disordered regions span residues 67–89 (DEAQ…EQKS) and 151–212 (YEPL…SSRY). Residues 71–89 (TETNGVNGETSSASTEQKS) show a composition bias toward polar residues. Composition is skewed to low complexity over residues 163 to 173 (TGQGEDAANEP) and 187 to 201 (ETTA…ASTE). In terms of domain architecture, RMT2 spans 205–424 (PDVTSSRYLD…YRLPLCKFMD (220 aa)). S-adenosyl-L-methionine-binding positions include tyrosine 212, methionine 241, 261-266 (HGMGIV), 282-284 (EAH), 309-310 (WQ), and aspartate 329.

The protein belongs to the class I-like SAM-binding methyltransferase superfamily. RMT2 methyltransferase family. As to quaternary structure, monomer.

The protein localises to the cytoplasm. It localises to the nucleus. Functionally, S-adenosyl-L-methionine-dependent protein-arginine N-methyltransferase that methylates the delta-nitrogen atom of arginine residues to form N5-methylarginine (type IV) in target proteins. Monomethylates ribosomal protein L12. This chain is Protein arginine N-methyltransferase 2, found in Aspergillus fumigatus (strain ATCC MYA-4609 / CBS 101355 / FGSC A1100 / Af293) (Neosartorya fumigata).